A 1200-amino-acid chain; its full sequence is Nuclear pore complex protein Nup133 (1200 aa).

The segment at M1–A28 is disordered.

The protein belongs to the nucleoporin Nup133 family. In terms of assembly, forms part of the Nup107-Nup160 subcomplex in the nuclear pore.

The protein resides in the nucleus. It localises to the nuclear pore complex. Functionally, probable component of the nuclear pore complex (NPC). Plays a role in NPC assembly and/or maintenance. In Drosophila melanogaster (Fruit fly), this protein is Nuclear pore complex protein Nup133.